A 142-amino-acid chain; its full sequence is Transcriptional regulator MraZ (142 aa).

2 consecutive SpoVT-AbrB domains span residues 5–51 (ASSL…PRNE) and 77–120 (AMDV…DAAT).

The protein belongs to the MraZ family. Forms oligomers.

The protein resides in the cytoplasm. The protein localises to the nucleoid. The sequence is that of Transcriptional regulator MraZ from Polaromonas sp. (strain JS666 / ATCC BAA-500).